A 201-amino-acid chain; its full sequence is Recombination protein RecR (201 aa).

The segment at 60–75 adopts a C4-type zinc-finger fold; sequence CKSCGNIDTRNPCTVC. In terms of domain architecture, Toprim spans 83-178; that stretch reads SIIVVVADVA…KVTRLAHGVP (96 aa).

Belongs to the RecR family.

Its function is as follows. May play a role in DNA repair. It seems to be involved in an RecBC-independent recombinational process of DNA repair. It may act with RecF and RecO. This chain is Recombination protein RecR, found in Rhodopseudomonas palustris (strain BisB5).